We begin with the raw amino-acid sequence, 301 residues long: tRNA dimethylallyltransferase (301 aa).

ATP is bound at residue G9–S16. T11–S16 lines the substrate pocket. Positions D34–Q37 are interaction with substrate tRNA.

This sequence belongs to the IPP transferase family. In terms of assembly, monomer. Mg(2+) serves as cofactor.

The enzyme catalyses adenosine(37) in tRNA + dimethylallyl diphosphate = N(6)-dimethylallyladenosine(37) in tRNA + diphosphate. Functionally, catalyzes the transfer of a dimethylallyl group onto the adenine at position 37 in tRNAs that read codons beginning with uridine, leading to the formation of N6-(dimethylallyl)adenosine (i(6)A). This chain is tRNA dimethylallyltransferase, found in Corynebacterium glutamicum (strain ATCC 13032 / DSM 20300 / JCM 1318 / BCRC 11384 / CCUG 27702 / LMG 3730 / NBRC 12168 / NCIMB 10025 / NRRL B-2784 / 534).